The following is a 632-amino-acid chain: ATP-dependent zinc metalloprotease FtsH (632 aa).

Over 1-9 (MKPTNEPKK) the chain is Cytoplasmic. The helical transmembrane segment at 10 to 30 (PFFQSPIVLAVLGGILLIFFL) threads the bilayer. Topologically, residues 31-116 (RSFNSDGSFS…INYSGFSESN (86 aa)) are periplasmic. Residues 117–137 (FFTDMLGWLMPILVILGLWMF) traverse the membrane as a helical segment. Residues 138–632 (MANRMQKNMG…RLIPLEEQAS (495 aa)) lie on the Cytoplasmic side of the membrane. Residue 210-217 (GPPGTGKT) participates in ATP binding. Zn(2+) is bound at residue His-434. Glu-435 is a catalytic residue. Residues His-438 and Asp-511 each coordinate Zn(2+).

This sequence in the central section; belongs to the AAA ATPase family. It in the C-terminal section; belongs to the peptidase M41 family. In terms of assembly, homohexamer. Zn(2+) is required as a cofactor.

Its subcellular location is the cell inner membrane. Its function is as follows. Acts as a processive, ATP-dependent zinc metallopeptidase for both cytoplasmic and membrane proteins. Plays a role in the quality control of integral membrane proteins. The protein is ATP-dependent zinc metalloprotease FtsH of Helicobacter pylori (strain J99 / ATCC 700824) (Campylobacter pylori J99).